Reading from the N-terminus, the 626-residue chain is DNA-directed RNA polymerase subunit gamma (626 aa).

Zn(2+) is bound by residues cysteine 71, cysteine 73, cysteine 86, and cysteine 89. Residues aspartate 467, aspartate 469, and aspartate 471 each coordinate Mg(2+).

Belongs to the RNA polymerase beta' chain family. RpoC1 subfamily. In terms of assembly, in cyanobacteria the RNAP catalytic core is composed of 2 alpha, 1 beta, 1 beta', 1 gamma and 1 omega subunit. When a sigma factor is associated with the core the holoenzyme is formed, which can initiate transcription. It depends on Mg(2+) as a cofactor. Zn(2+) serves as cofactor.

It carries out the reaction RNA(n) + a ribonucleoside 5'-triphosphate = RNA(n+1) + diphosphate. Functionally, DNA-dependent RNA polymerase catalyzes the transcription of DNA into RNA using the four ribonucleoside triphosphates as substrates. The chain is DNA-directed RNA polymerase subunit gamma from Synechocystis sp. (strain ATCC 27184 / PCC 6803 / Kazusa).